The chain runs to 329 residues: uncharacterized protein (329 aa).

An SIS domain is found at 37–180 (LAEKILGHSG…AMLLFHSRGV (144 aa)). 52-57 (GVGKSG) contacts ATP. 2 CBS domains span residues 206-265 (MFPK…GGEV) and 274-329 (MTAN…AGLL).

Belongs to the SIS family. GutQ/KpsF subfamily.

This is an uncharacterized protein from Chlamydia pneumoniae (Chlamydophila pneumoniae).